Reading from the N-terminus, the 279-residue chain is Large ribosomal subunit protein mL46 (279 aa).

Position 230 is an N6-acetyllysine (Lys-230).

This sequence belongs to the mitochondrion-specific ribosomal protein mL46 family. In terms of assembly, component of the mitochondrial ribosome large subunit (39S) which comprises a 16S rRNA and about 50 distinct proteins.

The protein resides in the mitochondrion. The chain is Large ribosomal subunit protein mL46 (MRPL46) from Pongo abelii (Sumatran orangutan).